A 1401-amino-acid polypeptide reads, in one-letter code: DNA-directed RNA polymerase subunit beta'' (1401 aa).

Residues C224, C295, C302, and C305 each contribute to the Zn(2+) site.

The protein belongs to the RNA polymerase beta' chain family. RpoC2 subfamily. In plastids the minimal PEP RNA polymerase catalytic core is composed of four subunits: alpha, beta, beta', and beta''. When a (nuclear-encoded) sigma factor is associated with the core the holoenzyme is formed, which can initiate transcription. It depends on Zn(2+) as a cofactor.

It localises to the plastid. The protein localises to the chloroplast. It catalyses the reaction RNA(n) + a ribonucleoside 5'-triphosphate = RNA(n+1) + diphosphate. Functionally, DNA-dependent RNA polymerase catalyzes the transcription of DNA into RNA using the four ribonucleoside triphosphates as substrates. The chain is DNA-directed RNA polymerase subunit beta'' from Ipomoea purpurea (Common morning glory).